The primary structure comprises 428 residues: Dihydroorotase (428 aa).

The Zn(2+) site is built by His59 and His61. Substrate-binding positions include 61–63 and Asn93; that span reads HLR. The Zn(2+) site is built by Asp151, His178, and His231. A substrate-binding site is contributed by Asn277. Asp304 contributes to the Zn(2+) binding site. Residue Asp304 is part of the active site. Substrate is bound by residues His308 and 322–323; that span reads FG.

Belongs to the metallo-dependent hydrolases superfamily. DHOase family. Class I DHOase subfamily. Requires Zn(2+) as cofactor.

It catalyses the reaction (S)-dihydroorotate + H2O = N-carbamoyl-L-aspartate + H(+). Its pathway is pyrimidine metabolism; UMP biosynthesis via de novo pathway; (S)-dihydroorotate from bicarbonate: step 3/3. Catalyzes the reversible cyclization of carbamoyl aspartate to dihydroorotate. This chain is Dihydroorotase, found in Bacillus cytotoxicus (strain DSM 22905 / CIP 110041 / 391-98 / NVH 391-98).